Reading from the N-terminus, the 326-residue chain is Ribosomal large subunit pseudouridine synthase D (326 aa).

The 74-residue stretch at 18–91 (QRLDQALAEM…IPLDIVYEDD (74 aa)) folds into the S4 RNA-binding domain. The active site involves aspartate 139. Residues 183–203 (GTVNEPISRHPTKRTHMSVHP) are disordered.

Belongs to the pseudouridine synthase RluA family.

Its subcellular location is the cytoplasm. It catalyses the reaction uridine(1911/1915/1917) in 23S rRNA = pseudouridine(1911/1915/1917) in 23S rRNA. Its function is as follows. Responsible for synthesis of pseudouridine from uracil at positions 1911, 1915 and 1917 in 23S ribosomal RNA. The protein is Ribosomal large subunit pseudouridine synthase D (rluD) of Salmonella typhi.